A 259-amino-acid polypeptide reads, in one-letter code: Phosphatidylglycerol--prolipoprotein diacylglyceryl transferase (259 aa).

4 helical membrane passes run 12-32, 46-66, 83-103, and 109-129; these read LSLH…VYLA, IIDF…IYYV, IWNG…VLFV, and VLNP…AQAI. A 1,2-diacyl-sn-glycero-3-phospho-(1'-sn-glycerol) is bound at residue arginine 131. A run of 3 helical transmembrane segments spans residues 167–187, 194–214, and 226–246; these read VPTF…IMVW, LVDG…RLVI, and GIRV…VFIF.

Belongs to the Lgt family.

It localises to the cell membrane. The catalysed reaction is L-cysteinyl-[prolipoprotein] + a 1,2-diacyl-sn-glycero-3-phospho-(1'-sn-glycerol) = an S-1,2-diacyl-sn-glyceryl-L-cysteinyl-[prolipoprotein] + sn-glycerol 1-phosphate + H(+). It functions in the pathway protein modification; lipoprotein biosynthesis (diacylglyceryl transfer). Catalyzes the transfer of the diacylglyceryl group from phosphatidylglycerol to the sulfhydryl group of the N-terminal cysteine of a prolipoprotein, the first step in the formation of mature lipoproteins. In Streptococcus equi subsp. equi (strain 4047), this protein is Phosphatidylglycerol--prolipoprotein diacylglyceryl transferase.